The primary structure comprises 332 residues: Malate dehydrogenase, cytoplasmic (332 aa).

Residues glutamine 16 to isoleucine 17, aspartate 43, and glycine 90 contribute to the NAD(+) site. Arginine 99 serves as a coordination point for oxaloacetate. NAD(+) is bound by residues glutamine 113 and asparagine 132. Asparagine 132, arginine 163, histidine 188, and serine 243 together coordinate oxaloacetate. Catalysis depends on histidine 188, which acts as the Proton acceptor.

It belongs to the LDH/MDH superfamily. MDH type 2 family. As to quaternary structure, monomer. As to expression, expressed constitutively in roots.

It is found in the cell membrane. It carries out the reaction (S)-malate + NAD(+) = oxaloacetate + NADH + H(+). Malate dehydrogenase; catalyzes a reversible NAD-dependent dehydrogenase reaction involved in central metabolism and redox homeostasis. This Zea mays (Maize) protein is Malate dehydrogenase, cytoplasmic.